The chain runs to 521 residues: Occludin (521 aa).

Topologically, residues 1-66 (MSSRPFESPP…KWTSPPGVIR (66 aa)) are cytoplasmic. In terms of domain architecture, MARVEL spans 60–268 (SPPGVIRILS…IIFFAVKTRR (209 aa)). Residues 67–89 (ILSMLVIVMCIAIFGCVASTLAW) form a helical membrane-spanning segment. At 90-134 (DRGYGTGLMGGSIGYPYGSGFGSYGTGYGYGFGYGYGYGGYTDPR) the chain is on the extracellular side. The chain crosses the membrane as a helical span at residues 135–159 (AAKGFLLAMVAFCFIAALVIFVTSV). At 160–169 (IRSDISRTRR) the chain is on the cytoplasmic side. A helical transmembrane segment spans residues 170–194 (YYLTVIILSAFLGVMMFIATIVYIM). Residues 195–242 (GVNPTAQASGSLYSSQIYAMCNQFYASTATGLYMDQYLYHYCVVDPQE) are Extracellular-facing. C215 and C236 are joined by a disulfide. A helical transmembrane segment spans residues 243 to 264 (AIAIVLGFMVIVAFALIIFFAV). Residues 265–521 (KTRRKMDRYD…MVGDYDRQKT (257 aa)) lie on the Cytoplasmic side of the membrane. Phosphoserine is present on S301. The tract at residues 301-407 (SAGTQDMPPP…ETDYTTGGES (107 aa)) is disordered. Position 304 is a phosphothreonine (T304). Phosphoserine is present on residues S312, S320, and S339. Y367 is subject to Phosphotyrosine. A phosphoserine mark is found at S368 and S369. Residues 380 to 389 (APSKGRTGRP) show a composition bias toward basic residues. The span at 390–399 (KRLEQDHYET) shows a compositional bias: basic and acidic residues. 2 positions are modified to phosphotyrosine: Y397 and Y401. Residues T402 and T403 each carry the phosphothreonine; by PKC/PRKCH modification. S407 carries the phosphoserine modification. The OCEL domain occupies 413–521 (EDWIREYPPI…MVGDYDRQKT (109 aa)). Residues 424-488 (SDQQRQLYKR…EYNRLKQVKG (65 aa)) are a coiled coil. A Phosphoserine modification is found at S489.

The protein belongs to the ELL/occludin family. Interacts with TJP1/ZO1. Interacts with VAPA. Interacts with CLDN1, CLDN6, CLDN9, CLDN11, CLDN12 and CLDN17. Interacts with PLSCR1. Interacts with LSR, ILDR1 and ILDR2. Interacts with TJP2/ZO2. Post-translationally, dephosphorylated by PTPRJ. Less-phosphorylated forms are found in basolateral membrane, cytosol and tight junction. More-heavily phosphorylated forms are concentrated exclusively in tight junction. In terms of tissue distribution, localized at tight junctions of both epithelial and endothelial cells.

It localises to the cell membrane. The protein resides in the cell junction. The protein localises to the tight junction. Its function is as follows. May play a role in the formation and regulation of the tight junction (TJ) paracellular permeability barrier. Interacts with ZO-1. This chain is Occludin (OCLN), found in Canis lupus familiaris (Dog).